The following is a 232-amino-acid chain: Phosphatidylserine decarboxylase proenzyme (232 aa).

The Schiff-base intermediate with substrate; via pyruvic acid role is filled by Ser190. Pyruvic acid (Ser); by autocatalysis is present on Ser190.

Belongs to the phosphatidylserine decarboxylase family. PSD-A subfamily. In terms of assembly, heterodimer of a large membrane-associated beta subunit and a small pyruvoyl-containing alpha subunit. Pyruvate is required as a cofactor. Post-translationally, is synthesized initially as an inactive proenzyme. Formation of the active enzyme involves a self-maturation process in which the active site pyruvoyl group is generated from an internal serine residue via an autocatalytic post-translational modification. Two non-identical subunits are generated from the proenzyme in this reaction, and the pyruvate is formed at the N-terminus of the alpha chain, which is derived from the carboxyl end of the proenzyme. The post-translation cleavage follows an unusual pathway, termed non-hydrolytic serinolysis, in which the side chain hydroxyl group of the serine supplies its oxygen atom to form the C-terminus of the beta chain, while the remainder of the serine residue undergoes an oxidative deamination to produce ammonia and the pyruvoyl prosthetic group on the alpha chain.

Its subcellular location is the cell membrane. It catalyses the reaction a 1,2-diacyl-sn-glycero-3-phospho-L-serine + H(+) = a 1,2-diacyl-sn-glycero-3-phosphoethanolamine + CO2. Its pathway is phospholipid metabolism; phosphatidylethanolamine biosynthesis; phosphatidylethanolamine from CDP-diacylglycerol: step 2/2. Catalyzes the formation of phosphatidylethanolamine (PtdEtn) from phosphatidylserine (PtdSer). The sequence is that of Phosphatidylserine decarboxylase proenzyme from Brucella canis (strain ATCC 23365 / NCTC 10854 / RM-666).